The chain runs to 445 residues: Ribosome biogenesis protein YTM1 (445 aa).

A ubiquitin-like (UBL) domain region spans residues 8–89 (VKVKFFTREQ…EAVLNVEYTR (82 aa)). Residues 99–445 (SFSNEDWVSA…FNKGDNIFKN (347 aa)) form a sufficient for interaction with ERB1 and association with 66S pre-ribosomes region. WD repeat units lie at residues 101-138 (SNEDWVSALDVGAERIVSGSYDGVVRTWNLSGKIEKQY), 140-178 (GHTGAVRAVKFISSTRLVSGGNDRTLRLWKTKNDDVKHV), 195-232 (GHQAPVVSVDVQGDRILSASYDNSIGFWSTNHKDMTAV), 270-310 (SHKA…CVDT), 312-351 (STSYSLLSMVELPKLRLLACGSSARHITLHDPRADSSAKI), 358-398 (GHKN…SIYT), and 409-445 (GINDKVFAVKWAKGVGIISGGQDKKIQFNKGDNIFKN).

It belongs to the WD repeat WDR12/YTM1 family. In terms of assembly, component of the NOP7 complex, composed of ERB1, NOP7 and YTM1. The complex is held together by ERB1, which interacts with NOP7 via its N-terminal domain and with YTM1 via a high-affinity interaction between the seven-bladed beta-propeller domains of the 2 proteins. The NOP7 complex associates with the 66S pre-ribosome. Interacts (via UBL domain) with MDN1 (via VWFA/MIDAS domain).

Its subcellular location is the nucleus. The protein localises to the nucleolus. It localises to the nucleoplasm. Its function is as follows. Component of the NOP7 complex, which is required for maturation of the 25S and 5.8S ribosomal RNAs and formation of the 60S ribosome. The chain is Ribosome biogenesis protein YTM1 from Eremothecium gossypii (strain ATCC 10895 / CBS 109.51 / FGSC 9923 / NRRL Y-1056) (Yeast).